The following is a 161-amino-acid chain: Small ribosomal subunit protein uS9 (161 aa).

The protein belongs to the universal ribosomal protein uS9 family.

This chain is Small ribosomal subunit protein uS9, found in Rickettsia felis (strain ATCC VR-1525 / URRWXCal2) (Rickettsia azadi).